A 479-amino-acid polypeptide reads, in one-letter code: Chromosomal replication initiator protein DnaA (479 aa).

The interval 1–94 (MKGGTMVENA…QTLWRTERED (94 aa)) is domain I, interacts with DnaA modulators. Residues 94-142 (DIKGVELQVKRGLPEVSMGDAEDGEDGSGEGHELATQAAAPESRSDLAV) form a domain II region. Residues 106 to 137 (LPEVSMGDAEDGEDGSGEGHELATQAAAPESR) form a disordered region. The domain III, AAA+ region stretch occupies residues 143–359 (PLDPRFTFDT…GALNRLIAHA (217 aa)). Residues Gly188, Gly190, Lys191, and Thr192 each coordinate ATP. The tract at residues 360 to 479 (DLVGRPVTLD…VELLRRMLEG (120 aa)) is domain IV, binds dsDNA.

This sequence belongs to the DnaA family. In terms of assembly, oligomerizes as a right-handed, spiral filament on DNA at oriC.

It is found in the cytoplasm. Its function is as follows. Plays an essential role in the initiation and regulation of chromosomal replication. ATP-DnaA binds to the origin of replication (oriC) to initiate formation of the DNA replication initiation complex once per cell cycle. Binds the DnaA box (a 9 base pair repeat at the origin) and separates the double-stranded (ds)DNA. Forms a right-handed helical filament on oriC DNA; dsDNA binds to the exterior of the filament while single-stranded (ss)DNA is stabiized in the filament's interior. The ATP-DnaA-oriC complex binds and stabilizes one strand of the AT-rich DNA unwinding element (DUE), permitting loading of DNA polymerase. After initiation quickly degrades to an ADP-DnaA complex that is not apt for DNA replication. Binds acidic phospholipids. The protein is Chromosomal replication initiator protein DnaA of Gluconobacter oxydans (strain 621H) (Gluconobacter suboxydans).